The chain runs to 219 residues: Chloramphenicol acetyltransferase (219 aa).

His193 functions as the Proton acceptor in the catalytic mechanism.

Belongs to the chloramphenicol acetyltransferase family.

The enzyme catalyses chloramphenicol + acetyl-CoA = chloramphenicol 3-acetate + CoA. In terms of biological role, this enzyme is an effector of chloramphenicol resistance in bacteria. This chain is Chloramphenicol acetyltransferase (cat), found in Acinetobacter calcoaceticus subsp. anitratus.